Reading from the N-terminus, the 566-residue chain is Proline--tRNA ligase (566 aa).

Belongs to the class-II aminoacyl-tRNA synthetase family. ProS type 1 subfamily. In terms of assembly, homodimer.

The protein localises to the cytoplasm. It catalyses the reaction tRNA(Pro) + L-proline + ATP = L-prolyl-tRNA(Pro) + AMP + diphosphate. Its function is as follows. Catalyzes the attachment of proline to tRNA(Pro) in a two-step reaction: proline is first activated by ATP to form Pro-AMP and then transferred to the acceptor end of tRNA(Pro). As ProRS can inadvertently accommodate and process non-cognate amino acids such as alanine and cysteine, to avoid such errors it has two additional distinct editing activities against alanine. One activity is designated as 'pretransfer' editing and involves the tRNA(Pro)-independent hydrolysis of activated Ala-AMP. The other activity is designated 'posttransfer' editing and involves deacylation of mischarged Ala-tRNA(Pro). The misacylated Cys-tRNA(Pro) is not edited by ProRS. In Staphylococcus haemolyticus (strain JCSC1435), this protein is Proline--tRNA ligase.